We begin with the raw amino-acid sequence, 510 residues long: Thermostable carboxypeptidase 1 (510 aa).

The Peptidase M32 domain maps to Pro3–Ala506. An HPF motif is present at residues His245–Phe247. Positions Asp255–Thr259 match the DXRXT motif. Zn(2+) is bound at residue His276. The short motif at His276–His280 is the HEXXH element. Glu277 (proton donor/acceptor) is an active-site residue. The Zn(2+) site is built by His280 and Glu306. Positions His305–Gln308 match the HES/GQ motif. An I/NRXXA/SD motif is present at residues Ile357 to Asp362. The GXXQDXHW motif lies at Gly412–Trp419.

It belongs to the peptidase M32 family. As to quaternary structure, homodimer. It depends on Zn(2+) as a cofactor.

The enzyme catalyses Release of a C-terminal amino acid with broad specificity, except for -Pro.. Functionally, broad specificity carboxypetidase that releases amino acids sequentially from the C-terminus, including neutral, aromatic, polar and basic residues, but not Pro. Has lower activity with substrates ending with Gly or Glu. The polypeptide is Thermostable carboxypeptidase 1 (Thermus thermophilus (strain ATCC 27634 / DSM 579 / HB8)).